Consider the following 303-residue polypeptide: MPEASSPRRTPQNVPYQDLPHLVNADGQYLFCRYWKPSGTPKALIFVSHGAGEHCGRYDELAHMLKGLDMLVFAHDHVGHGQSEGERMVVSDFQVFVRDVLQHVDTIQKDYPDVPIFLLGHSMGGAISILVAAERPTYFSGMVLISPLVLANPESASTLKVLAAKLLNFVLPNMTLGRIDSSVLSRNKSEVDLYNSDPLVCRAGLKVCFGIQLLNAVARVERAMPRLTLPFLLLQGSADRLCDSKGAYLLMESSRSQDKTLKMYEGAYHVLHRELPEVTNSVLHEVNSWVSHRIAAAGAGCPP.

Threonine 10 carries the phosphothreonine modification. The residue at position 58 (tyrosine 58) is a 3'-nitrotyrosine. Serine 122 functions as the Nucleophile in the catalytic mechanism. Serine 189 is modified (phosphoserine). Residues aspartate 239 and histidine 269 each act as charge relay system in the active site.

This sequence belongs to the AB hydrolase superfamily. Monoacylglycerol lipase family. In terms of assembly, homodimer. As to expression, ubiquitous.

The protein resides in the cytoplasm. Its subcellular location is the cytosol. It is found in the membrane. It carries out the reaction Hydrolyzes glycerol monoesters of long-chain fatty acids.. The catalysed reaction is a 1-acylglycerol + H2O = glycerol + a fatty acid + H(+). The enzyme catalyses a 2-acylglycerol + H2O = glycerol + a fatty acid + H(+). It catalyses the reaction 2-(5Z,8Z,11Z,14Z-eicosatetraenoyl)-glycerol + H2O = glycerol + (5Z,8Z,11Z,14Z)-eicosatetraenoate + H(+). It carries out the reaction 1-octanoylglycerol + H2O = octanoate + glycerol + H(+). The catalysed reaction is 1-decanoylglycerol + H2O = decanoate + glycerol + H(+). The enzyme catalyses 1-dodecanoylglycerol + H2O = dodecanoate + glycerol + H(+). It catalyses the reaction 1-tetradecanoylglycerol + H2O = tetradecanoate + glycerol + H(+). It carries out the reaction 2-hexadecanoylglycerol + H2O = glycerol + hexadecanoate + H(+). The catalysed reaction is 1-(9Z-octadecenoyl)-glycerol + H2O = glycerol + (9Z)-octadecenoate + H(+). The enzyme catalyses 2-(9Z-octadecenoyl)-glycerol + H2O = glycerol + (9Z)-octadecenoate + H(+). It catalyses the reaction 2-(9Z,12Z-octadecadienoyl)-glycerol + H2O = (9Z,12Z)-octadecadienoate + glycerol + H(+). It carries out the reaction 1-(5Z,8Z,11Z,14Z-eicosatetraenoyl)-glycerol + H2O = glycerol + (5Z,8Z,11Z,14Z)-eicosatetraenoate + H(+). The catalysed reaction is 1-(9Z,12Z-octadecadienoyl)-glycerol + H2O = (9Z,12Z)-octadecadienoate + glycerol + H(+). The enzyme catalyses 1-hexadecanoylglycerol + H2O = glycerol + hexadecanoate + H(+). It catalyses the reaction 1-octadecanoylglycerol + H2O = octadecanoate + glycerol + H(+). It carries out the reaction prostaglandin E2 1-glyceryl ester + H2O = prostaglandin E2 + glycerol + H(+). The catalysed reaction is prostaglandin D2-1-glycerol ester + H2O = prostaglandin D2 + glycerol + H(+). The enzyme catalyses 2-glyceryl-15-deoxy-Delta(12,14)-prostaglandin J2 + H2O = 15-deoxy-Delta(12,14)-prostaglandin J2 + glycerol + H(+). It catalyses the reaction prostaglandin F2alpha 1-glyceryl ester + H2O = prostaglandin F2alpha + glycerol + H(+). It participates in glycerolipid metabolism; triacylglycerol degradation. Its function is as follows. Converts monoacylglycerides to free fatty acids and glycerol. Hydrolyzes the endocannabinoid 2-arachidonoylglycerol, and thereby contributes to the regulation of endocannabinoid signaling, nociperception and perception of pain. Regulates the levels of fatty acids that serve as signaling molecules and promote cancer cell migration, invasion and tumor growth. This Mus musculus (Mouse) protein is Monoglyceride lipase.